We begin with the raw amino-acid sequence, 4468 residues long: MAKMGKYGLGFKWAPEFPWMLPNASEKLGNPERSEEDGFCPSAAQEPKVKGKTLVNHVRVNCSRLPALECCVQSAIIRDIFVDEDPQKVEASTMMALQFGSAVLVKPSKRLSIQAWTNLGVLPKTAAMGLFKRVCLCNTRECSCDAHVAFHLFTVQPDGVCLGNGRFIGWFVPVTAIPEYAKQWLQPWSILLRKGGNKGSVTSGHFRRAVTMPVYDFNVEDACEEVHLNPKGKYSCKAYALLKGYRGVKPILFVDQYGCDYTGCLAKGLEDYGDLTLSEMKELFPVWRDSLDSEVLVAWHVDRDPRAAMRLQTLATVRCIDYVGQPTEDVVDGDVVVREPAHLLAANAIVKRLPRLVETMLYTDSSVTEFCYKTKLCECGFITQFGYVDCCGDTCDFRGWVAGNMMDGFPCPGCTKNYMPWELEAQSSGVIPEGGVLFTQSTDTVNRESFKLYGHAVVPFGSAVYWSPCPGMWLPVIWSSVKSYSGLTYTGVVGCKAIVQETDAICRSLYMDYVQHKCGNLEQRAILGLDDVYHRQLLVNRGDYSLLLENVDLFVKRRAEFACKFATCGDGLVPLLLDGLVPRSYYLIKSGQAFTSMMVNFSHEVTDMCMDMALLFMHDVKVATKYVKKVTGKLAVRFKALGVAVVRKITEWFDLAVDIAASAAGWLCYQLVNGLFAVANGVITFVQEVPELVKNFVDKFKAFFKVLIDSMSVSILSGLTVVKTASNRVCLAGSKVYEVVQKSLSAYVMPVGCSEATCLVGEIEPAVFEDDVVDVVKAPLTYQGCCKPPTSFEKICIVDKLYMAKCGDQFYPVVVDNDTVGVLDQCWRFPCAGKKVEFNDKPKVRKIPSTRKIKITFALDATFDSVLSKACSEFEVDKDVTLDELLDVVLDAVESTLSPCKEHDVIGTKVCALLDRLAGDYVYLFDEGGDEVIAPRMYCSFSAPDDEDCVAADVVDADENQDDDAEDSAVLVADTQEEDGVAKGQVEADSEICVAHTGSQEELAEPDAVGSQTPIASAEETEVGEASDREGIAEAKATVCADAVDACPDQVEAFEIEKVEDSILDELQTELNAPADKTYEDVLAFDAVCSEALSAFYAVPSDETHFKVCGFYSPAIERTNCWLRSTLIVMQSLPLEFKDLEMQKLWLSYKAGYDQCFVDKLVKSVPKSIILPQGGYVADFAYFFLSQCSFKAYANWRCLECDMELKLQGLDAMFFYGDVVSHMCKCGNSMTLLSADIPYTLHFGVRDDKFCAFYTPRKVFRAACAVDVNDCHSMAVVEGKQIDGKVVTKFIGDKFDFMVGYGMTFSMSPFELAQLYGSCITPNVCFVKGDVIKVVRLVNAEVIVNPANGRMAHGAGVAGAIAEKAGSAFIKETSDMVKAQGVCQVGECYESAGGKLCKKVLNIVGPDARGHGKQCYSLLERAYQHINKCDNVVTTLISAGIFSVPTDVSLTYLLGVVTKNVILVSNNQDDFDVIEKCQVTSVAGTKALSLQLAKNLCRDVKFVTNACSSLFSESCFVSSYDVLQEVEALRHDIQLDDDARVFVQANMDCLPTDWRLVNKFDSVDGVRTIKYFECPGGIFVSSQGKKFGYVQNGSFKEASVSQIRALLANKVDVLCTVDGVNFRSCCVAEGEVFGKTLGSVFCDGINVTKVRCSAIYKGKVFFQYSDLSEADLVAVKDAFGFDEPQLLKYYTMLGMCKWPVVVCGNYFAFKQSNNNCYINVACLMLQHLSLKFPKWQWQEAWNEFRSGKPLRFVSLVLAKGSFKFNEPSDSIDFMRVVLREADLSGATCNLEFVCKCGVKQEQRKGVDAVMHFGTLDKGDLVRGYNIACTCGSKLVHCTQFNVPFLICSNTPEGRKLPDDVVAANIFTGGSVGHYTHVKCKPKYQLYDACNVNKVSEAKGNFTDCLYLKNLKQTFSSVLTTFYLDDVKCVEYKPDLSQYYCESGKYYTKPIIKAQFRTFEKVDGVYTNFKLVGHSIAEKLNAKLGFDCNSPFVEYKITEWPTATGDVVLASDDLYVSRYSSGCITFGKPVVWLGHEEASLKSLTYFNRPSVVCENKFNVLPVDVSEPTDKGPVPAAVLVTGVPGADASAGAGIAKEQKACASASVEDQVVTEVRQEPSVSAADVKEVKLNGVKKPVKVEGSVVVNDPTSETKVVKSLSIVDVYDMFLTGCKYVVWTANELSRLVNSPTVREYVKWGMGKIVTPAKLLLLRDEKQEFVAPKVVKAKAIACYCAVKWFLLYCFSWIKFNTDNKVIYTTEVASKLTFKLCCLAFKNALQTFNWSVVSRGFFLVATVFLLWFNFLYANVILSDFYLPNIGPLPTFVGQIVAWFKTTFGVSTICDFYQVTDLGYRSSFCNGSMVCELCFSGFDMLDNYDAINVVQHVVDRRLSFDYISLFKLVVELVIGYSLYTVCFYPLFVLIGMQLLTTWLPEFFMLETMHWSARLFVFVANMLPAFTLLRFYIVVTAMYKVYCLCRHVMYGCSKPGCLFCYKRNRSVRVKCSTVVGGSLRYYDVMANGGTGFCTKHQWNCLNCNSWKPGNTFITHEAAADLSKELKRPVNPTDSAYYSVTEVKQVGCSMRLFYERDGQRVYDDVNASLFVDMNGLLHSKVKGVPETHVVVVENEADKAGFLGAAVFYAQSLYRPMLMVEKKLITTANTGLSVSRTMFDLYVDSLLNVLDVDRKSLTSFVNAAHNSLKEGVQLEQVMDTFIGCARRKCAIDSDVETKSITKSVMSAVNAGVDFTDESCNNLVPTYVKSDTIVAADLGVLIQNNAKHVQANVAKAANVACIWSVDAFNQLSADLQHRLRKACSKTGLKIKLTYNKQEANVPILTTPFSLKGGAVFSRMLQWLFVANLICFIVLWALMPTYAVHKSDMQLPLYASFKVIDNGVLRDVSVTDACFANKFNQFDQWYESTFGLAYYRNSKACPVVVAVIDQDIGHTLFNVPTTVLRYGFHVLHFITHAFATDSVQCYTPHMQIPYDNFYASGCVLSSLCTMLAHADGTPHPYCYTGGVMHNASLYSSLAPHVRYNLASSNGYIRFPEVVSEGIVRVVRTRSMTYCRVGLCEEAEEGICFNFNRSWVLNNPYYRAMPGTFCGRNAFDLIHQVLGGLVRPIDFFALTASSVAGAILAIIVVLAFYYLIKLKRAFGDYTSVVVINVIVWCINFLMLFVFQVYPTLSCLYACFYFYTTLYFPSEISVVMHLQWLVMYGAIMPLWFCIIYVAVVVSNHALWLFSYCRKIGTEVRSDGTFEEMALTTFMITKESYCKLKNSVSDVAFNRYLSLYNKYRYFSGKMDTAAYREAACSQLAKAMETFNHNNGNDVLYQPPTASVTTSFLQSGIVKMVSPTSKVEPCIVSVTYGNMTLNGLWLDDKVYCPRHVICSSADMTDPDYPNLLCRVTSSDFCVMSGRMSLTVMSYQMQGCQLVLTVTLQNPNTPKYSFGVVKPGETFTVLAAYNGRPQGAFHVTLRSSHTIKGSFLCGSCGSVGYVLTGDSVRFVYMHQLELSTGCHTGTDFSGNFYGPYRDAQVVQLPVQDYTQTVNVVAWLYAAIFNRCNWFVQSDSCSLEEFNVWAMTNGFSSIKADLVLDALASMTGVTVEQVLAAIKRLHSGFQGKQILGSCVLEDETPSDVYQQLAGVKLQSKRTRVIKGTCCWILASTFLFCSIISAFVKWTMFMYVTTHMLGVTLCALCFVSFAMLLIKHKHLYLTMYIMPVLCTFYTNYLVVYKQSFRGLAYAWLSHFVPAVDYTYMDEVLYGVVLLVAMVFVTMRSINHDVFSIMFLVGRLVSLVSMWYFGANLEEEVLLFLTSLFGTYTWTTMLSLATAKVIAKWLAVNVLYFTDVPQIKLVLLSYLCIGYVCCCYWGILSLLNSIFRMPLGVYNYKISVQELRYMNANGLRPPRNSFEALMLNFKLLGIGGVPVIEVSQIQSRLTDVKCANVVLLNCLQHLHIASNSKLWQYCSTLHNEILATSDLSMAFDKLAQLLVVLFANPAAVDSKCLASIEEVSDDYVRDNTVLQALQSEFVNMASFVEYELAKKNLDEAKASGSANQQQIKQLEKACNIAKSAYERDRAVARKLERMADLALTNMYKEARINDKKSKVVSALQTMLFSMVRKLDNQALNSILDNAVKGCVPLNAIPSLTSNTLTIIVPDKQVFDQVVDNVYVTYAGNVWHIQFIQDADGAVKQLNEIDVNSTWPLVIAANRHNEVSTVVLQNNELMPQKLRTQVVNSGSDMNCNTPTQCYYNTTGTGKIVYAILSDCDGLKYTKIVKEDGNCVVLELDPPCKFSVQDVKGLKIKYLYFVKGCNTLARGWVVGTLSSTVRLQAGTATEYASNSAILSLCAFSVDPKKTYLDYIKQGGVPVTNCVKMLCDHAGTGMAITIKPEATTNQDSYGGASVCIYCRSRVEHPDVDGLCKLRGKFVQVPLGIKDPVSYVLTHDVCQVCGFWRDGSCSCVGTGSQFQSKDTNFLNGFGVQV.

A CoV Nsp1 globular domain is found at 54 to 196 (LVNHVRVNCS…PWSILLRKGG (143 aa)). Positions 217-247 (FNVEDACEEVHLNPKGKYSCKAYALLKGYRG) constitute a BetaCoV Nsp1 C-terminal domain. The region spanning 251 to 511 (ILFVDQYGCD…TDAICRSLYM (261 aa)) is the CoV Nsp2 N-terminal domain. Zn(2+) contacts are provided by Cys390, Cys395, Cys411, and Cys414. The segment at 390 to 414 (CCGDTCDFRGWVAGNMMDGFPCPGC) is C4. Positions 518-706 (CGNLEQRAIL…VDKFKAFFKV (189 aa)) constitute a CoV Nsp2 middle domain. In terms of domain architecture, CoV Nsp2 C-terminal spans 726–832 (SNRVCLAGSK…LDQCWRFPCA (107 aa)). Residues 834-946 (KKVEFNDKPK…MYCSFSAPDD (113 aa)) enclose the Ubiquitin-like 1 domain. Residues 999 to 1027 (SQEELAEPDAVGSQTPIASAEETEVGEAS) are disordered. A Peptidase C16 1 domain is found at 1084 to 1333 (AFDAVCSEAL…VCFVKGDVIK (250 aa)). Cys1121 (for PL1-PRO activity) is an active-site residue. Zn(2+)-binding residues include Cys1198, Cys1201, Cys1224, and Cys1226. The C4-type 1 zinc finger occupies 1198-1226 (CLECDMELKLQGLDAMFFYGDVVSHMCKC). Active-site for PL1-PRO activity residues include His1272 and Asp1283. The 160-residue stretch at 1323 to 1482 (NVCFVKGDVI…VIEKCQVTSV (160 aa)) folds into the Macro domain. One can recognise a DPUP domain in the interval 1537–1609 (DDARVFVQAN…VSQIRALLAN (73 aa)). The 56-residue stretch at 1608 to 1663 (ANKVDVLCTVDGVNFRSCCVAEGEVFGKTLGSVFCDGINVTKVRCSAIYKGKVFFQ) folds into the Ubiquitin-like 2 domain. The 260-residue stretch at 1678–1937 (AFGFDEPQLL…CVEYKPDLSQ (260 aa)) folds into the Peptidase C16 2 domain. Cys1716 serves as the catalytic For PL2-PRO activity. Zn(2+) contacts are provided by Cys1794, Cys1796, Cys1828, and Cys1830. The segment at 1794–1830 (CKCGVKQEQRKGVDAVMHFGTLDKGDLVRGYNIACTC) adopts a C4-type 2 zinc-finger fold. Catalysis depends on for PL2-PRO activity residues His1873 and Asp1887. The Nucleic acid-binding domain maps to 1951 to 2052 (IKAQFRTFEK…TYFNRPSVVC (102 aa)). One can recognise a G2M domain in the interval 2107–2256 (QVVTEVRQEP…TDNKVIYTTE (150 aa)). Residues 2225 to 2645 (AIACYCAVKW…QSLYRPMLMV (421 aa)) form an HD1 region. 2 consecutive transmembrane segments (helical) span residues 2286–2306 (FFLVATVFLLWFNFLYANVIL) and 2314–2334 (IGPLPTFVGQIVAWFKTTFGV). The 3Ecto domain maps to 2322 to 2383 (GQIVAWFKTT…AINVVQHVVD (62 aa)). Disulfide bonds link Cys2338-Cys2362 and Cys2353-Cys2359. Helical transmembrane passes span 2400 to 2420 (LVIGYSLYTVCFYPLFVLIGM) and 2442 to 2462 (LFVFVANMLPAFTLLRFYIVV). The interval 2470–2560 (CLCRHVMYGC…ELKRPVNPTD (91 aa)) is Y1. The region spanning 2470-2837 (CLCRHVMYGC…LTTPFSLKGG (368 aa)) is the CoV Nsp3 Y domain. Residues His2474, Cys2479, Cys2484, Cys2487, Cys2520, His2523, Cys2527, and Cys2530 each contribute to the Zn(2+) site. Residues 2474–2487 (HVMYGCSKPGCLFC) are ZF1. The ZF2 stretch occupies residues 2520–2530 (CTKHQWNCLNC). The Y2 stretch occupies residues 2561–2653 (SAYYSVTEVK…MVEKKLITTA (93 aa)). Residues 2561-2837 (SAYYSVTEVK…LTTPFSLKGG (277 aa)) are coV-Y. A helical transmembrane segment spans residues 2625-2645 (AGFLGAAVFYAQSLYRPMLMV). A Y3 region spans residues 2654-2736 (NTGLSVSRTM…KSVMSAVNAG (83 aa)). Residues 2737-2837 (VDFTDESCNN…LTTPFSLKGG (101 aa)) are Y4. The next 6 membrane-spanning stretches (helical) occupy residues 2847 to 2867 (LFVANLICFIVLWALMPTYAV), 3096 to 3116 (AFDLIHQVLGGLVRPIDFFAL), 3118 to 3138 (ASSVAGAILAIIVVLAFYYLI), 3150 to 3170 (VVVINVIVWCINFLMLFVFQV), 3177 to 3197 (LYACFYFYTTLYFPSEISVVM), and 3202 to 3222 (LVMYGAIMPLWFCIIYVAVVV). Residues 2847-3222 (LFVANLICFI…FCIIYVAVVV (376 aa)) are HD2. The Nsp4C domain occupies 3236–3333 (IGTEVRSDGT…TASVTTSFLQ (98 aa)). Residues 3334–3635 (SGIVKMVSPT…YQQLAGVKLQ (302 aa)) form the Peptidase C30 domain. Residues His3374 and Cys3478 each act as for 3CL-PRO activity in the active site. The HD3 stretch occupies residues 3526–3860 (LPVQDYTQTV…VCCCYWGILS (335 aa)). Transmembrane regions (helical) follow at residues 3644–3664 (GTCCWILASTFLFCSIISAFV), 3674–3694 (THMLGVTLCALCFVSFAMLLI), 3699–3719 (LYLTMYIMPVLCTFYTNYLVV), 3742–3762 (TYMDEVLYGVVLLVAMVFVTM), 3769–3789 (VFSIMFLVGRLVSLVSMWYFG), 3796–3816 (VLLFLTSLFGTYTWTTMLSLA), and 3840–3860 (LVLLSYLCIGYVCCCYWGILS). A RdRp Nsp7 cofactor domain is found at 3922–4010 (SRLTDVKCAN…DYVRDNTVLQ (89 aa)). Residues 4011–4207 (ALQSEFVNMA…HNEVSTVVLQ (197 aa)) enclose the RdRp Nsp8 cofactor domain. One can recognise a Nsp9 ssRNA-binding domain in the interval 4208 to 4317 (NNELMPQKLR…GTLSSTVRLQ (110 aa)). One can recognise an ExoN/MTase coactivator domain in the interval 4318-4455 (AGTATEYASN…CVGTGSQFQS (138 aa)). 8 residues coordinate Zn(2+): Cys4391, Cys4394, His4400, Cys4407, Cys4433, Cys4436, Cys4444, and Cys4446. Zinc fingers lie at residues 4391–4407 (CIYCRSRVEHPDVDGLC) and 4433–4446 (CQVCGFWRDGSCSC).

Belongs to the coronaviruses polyprotein 1ab family. 3CL-PRO exists as monomer and homodimer. Eight copies of nsp7 and eight copies of nsp8 assemble to form a heterohexadecamer. Nsp9 is a dimer. Nsp10 forms a dodecamer. Specific enzymatic cleavages in vivo by its own proteases yield mature proteins. 3CL-PRO and PL-PRO proteinases are autocatalytically processed.

The protein resides in the host membrane. It is found in the host cytoplasm. The protein localises to the host perinuclear region. It catalyses the reaction Thiol-dependent hydrolysis of ester, thioester, amide, peptide and isopeptide bonds formed by the C-terminal Gly of ubiquitin (a 76-residue protein attached to proteins as an intracellular targeting signal).. The enzyme catalyses TSAVLQ-|-SGFRK-NH2 and SGVTFQ-|-GKFKK the two peptides corresponding to the two self-cleavage sites of the SARS 3C-like proteinase are the two most reactive peptide substrates. The enzyme exhibits a strong preference for substrates containing Gln at P1 position and Leu at P2 position.. It carries out the reaction a 5'-end diphospho-ribonucleoside in mRNA + GTP + H(+) = a 5'-end (5'-triphosphoguanosine)-ribonucleoside in mRNA + diphosphate. Functionally, the papain-like proteinase 1 (PL1-PRO) and papain-like proteinase 2 (PL2-PRO) are responsible for the cleavages located at the N-terminus of the replicase polyprotein. In addition, PLP2 possesses a deubiquitinating/deISGylating activity and processes both 'Lys-48'- and 'Lys-63'-linked polyubiquitin chains from cellular substrates. Antagonizes innate immune induction of type I interferon by blocking the phosphorylation, dimerization and subsequent nuclear translocation of host IRF-3. Responsible for the majority of cleavages as it cleaves the C-terminus of replicase polyprotein at 11 sites. Recognizes substrates containing the core sequence [ILMVF]-Q-|-[SGACN]. Inhibited by the substrate-analog Cbz-Val-Asn-Ser-Thr-Leu-Gln-CMK. Also contains an ADP-ribose-1''-phosphate (ADRP)-binding function. Its function is as follows. Nsp7-nsp8 hexadecamer may possibly confer processivity to the polymerase, maybe by binding to dsRNA or by producing primers utilized by the latter. In terms of biological role, catalytic subunit of viral RNA capping enzyme which catalyzes the RNA guanylyltransferase reaction for genomic and sub-genomic RNAs. The kinase-like NiRAN domain of NSP12 transfers RNA to the amino terminus of NSP9, forming a covalent RNA-protein intermediate. Subsequently, the NiRAN domain transfers RNA to GDP, forming the core cap structure GpppA-RNA. The NSP14 and NSP16 methyltransferases then add methyl groups to form functional cap structures. Functionally, binds to the 40S ribosomal subunit and inhibits host translation. The nsp1-40S ribosome complex further induces an endonucleolytic cleavage near the 5'UTR of host mRNAs, targeting them for degradation. By suppressing host gene expression, nsp1 facilitates efficient viral gene expression in infected cells and evasion from host immune response. This chain is Replicase polyprotein 1a, found in Murine coronavirus (strain A59) (MHV-A59).